Consider the following 303-residue polypeptide: ASC1-like protein (303 aa).

Transmembrane regions (helical) follow at residues 19-39 (YEDF…RFLL), 81-101 (CIYF…EPWF), 127-147 (ALYM…IFWE), 153-173 (FGVS…SYNI), 212-232 (YLCL…VLWS), and 255-275 (YIFN…WVLI). In terms of domain architecture, TLC spans 72 to 284 (RKFKESAWKC…IYRMLVKQIQ (213 aa)).

Its subcellular location is the endoplasmic reticulum membrane. Functionally, mediates resistance to sphinganine-analog mycotoxins (SAMs) by restoring the sphingolipid biosynthesis. Could salvage the transport of GPI-anchored proteins from the endoplasmic reticulum to the Golgi apparatus in ceramides-depleted cells after SAM exposure. The protein is ASC1-like protein of Solanum lycopersicum (Tomato).